The following is an 84-amino-acid chain: GTP cyclohydrolase 1 feedback regulatory protein (84 aa).

It belongs to the GFRP family. In terms of assembly, homopentamer. Forms a complex with GCH1 where a GCH1 homodecamer is sandwiched by two GFRP homopentamers.

Its subcellular location is the nucleus. It localises to the nucleus membrane. It is found in the cytoplasm. The protein resides in the cytosol. In terms of biological role, mediates tetrahydrobiopterin inhibition of GTP cyclohydrolase 1. This chain is GTP cyclohydrolase 1 feedback regulatory protein (gchfr), found in Xenopus tropicalis (Western clawed frog).